The following is a 394-amino-acid chain: S-adenosylmethionine synthase 1 (394 aa).

Glu11 contributes to the Mg(2+) binding site. His17 serves as a coordination point for ATP. Glu45 contributes to the K(+) binding site. Glu58 and Gln101 together coordinate L-methionine. Residues 169–171 (DGK), 237–240 (SGRF), Asp248, 254–255 (RK), Ala271, Lys275, and Lys279 each bind ATP. An L-methionine-binding site is contributed by Asp248. Lys279 provides a ligand contact to L-methionine.

This sequence belongs to the AdoMet synthase family. As to quaternary structure, homotetramer. It depends on Mn(2+) as a cofactor. Mg(2+) is required as a cofactor. Requires Co(2+) as cofactor. The cofactor is K(+).

It localises to the cytoplasm. The enzyme catalyses L-methionine + ATP + H2O = S-adenosyl-L-methionine + phosphate + diphosphate. It participates in amino-acid biosynthesis; S-adenosyl-L-methionine biosynthesis; S-adenosyl-L-methionine from L-methionine: step 1/1. In terms of biological role, catalyzes the formation of S-adenosylmethionine from methionine and ATP. The reaction comprises two steps that are both catalyzed by the same enzyme: formation of S-adenosylmethionine (AdoMet) and triphosphate, and subsequent hydrolysis of the triphosphate. The polypeptide is S-adenosylmethionine synthase 1 (SAMS1) (Triticum monococcum (Einkorn wheat)).